The primary structure comprises 831 residues: Cadherin-related family member 5 (831 aa).

The signal sequence occupies residues methionine 1–alanine 28. The Extracellular segment spans residues glutamine 29–alanine 641. N-linked (GlcNAc...) asparagine glycosylation is found at asparagine 36, asparagine 45, asparagine 84, asparagine 135, asparagine 143, asparagine 173, asparagine 201, asparagine 287, asparagine 311, asparagine 408, and asparagine 475. Cadherin domains lie at valine 53 to proline 125, serine 128 to phenylalanine 240, isoleucine 252 to phenylalanine 357, and serine 358 to arginine 459. A disordered region spans residues isoleucine 452–glycine 632. Over residues serine 473 to alanine 491 the composition is skewed to polar residues. Residues glycine 505 to serine 540 are compositionally biased toward low complexity. Residues alanine 541 to proline 554 show a composition bias toward polar residues. 2 repeat units span residues alanine 541–serine 571 and threonine 572–serine 602. The 3 X 31 AA approximate tandem repeats stretch occupies residues alanine 541–threonine 614. Residues threonine 555–threonine 572 are compositionally biased toward low complexity. 2 stretches are compositionally biased toward polar residues: residues glutamine 573 to proline 582 and alanine 589 to serine 623. One copy of the 3; truncated repeat lies at threonine 605 to threonine 614. A helical membrane pass occupies residues valine 642–valine 662. Residues histidine 663–isoleucine 831 are Cytoplasmic-facing. A mediates interaction with USH1C and MYO7B and is required for proper localization to microvilli tips and function in microvilli organization region spans residues histidine 663–isoleucine 831. Disordered regions lie at residues glycine 675 to lysine 774 and glutamate 793 to isoleucine 831. Serine 699, serine 721, and serine 725 each carry phosphoserine. A compositionally biased stretch (pro residues) spans proline 716 to glutamine 738. Threonine 728 is modified (phosphothreonine). Phosphoserine occurs at positions 736 and 753. The span at leucine 761–glycine 771 shows a compositional bias: basic and acidic residues. A Phosphothreonine modification is found at threonine 795. Residues aspartate 797–glutamate 807 show a composition bias toward low complexity. Residues serine 802, serine 804, and serine 806 each carry the phosphoserine modification.

As to quaternary structure, part of the IMAC/intermicrovillar adhesion complex/intermicrovillar tip-link complex composed of ANKS4B, MYO7B, USH1C, CDHR2 and CDHR5. Interacts (via cytoplasmic domain) with USH1C and MYO7B; required for proper localization of CDHR5 to microvilli tips and its function in brush border differentiation. In terms of processing, N- and O-glycosylated.

The protein localises to the apical cell membrane. Its subcellular location is the cell projection. The protein resides in the microvillus membrane. Intermicrovillar adhesion molecule that forms, via its extracellular domain, calcium-dependent heterophilic complexes with CDHR2 on adjacent microvilli. Thereby, controls the packing of microvilli at the apical membrane of epithelial cells. Through its cytoplasmic domain, interacts with microvillus cytoplasmic proteins to form the intermicrovillar adhesion complex/IMAC. This complex plays a central role in microvilli and epithelial brush border differentiation. The protein is Cadherin-related family member 5 of Mus musculus (Mouse).